Reading from the N-terminus, the 531-residue chain is Transporter mfs1 (531 aa).

10 helical membrane passes run 83–103, 119–139, 158–178, 182–202, 214–234, 241–261, 325–345, 358–378, 398–418, and 424–444; these read LVVT…SAIF, VPVI…PLIF, LIVF…GVLL, FLAG…LADI, FWSL…AAMV, WQFW…TFFM, IYIG…PILF, LVYM…FIYL, ILII…WFGW, and VHWI…FLLF. Residue N486 is glycosylated (N-linked (GlcNAc...) asparagine). The chain crosses the membrane as a helical span at residues 496–516; the sequence is GWGSTILGVISCIMIPIPFLI.

The protein belongs to the major facilitator superfamily. CAR1 family.

The protein localises to the endoplasmic reticulum. It is found in the membrane. This is Transporter mfs1 (mfs1) from Schizosaccharomyces pombe (strain 972 / ATCC 24843) (Fission yeast).